The chain runs to 285 residues: 2-dehydro-3-deoxyphosphooctonate aldolase (285 aa).

The protein belongs to the KdsA family.

It localises to the cytoplasm. It carries out the reaction D-arabinose 5-phosphate + phosphoenolpyruvate + H2O = 3-deoxy-alpha-D-manno-2-octulosonate-8-phosphate + phosphate. The protein operates within carbohydrate biosynthesis; 3-deoxy-D-manno-octulosonate biosynthesis; 3-deoxy-D-manno-octulosonate from D-ribulose 5-phosphate: step 2/3. It participates in bacterial outer membrane biogenesis; lipopolysaccharide biosynthesis. The sequence is that of 2-dehydro-3-deoxyphosphooctonate aldolase from Acinetobacter baumannii (strain SDF).